A 402-amino-acid polypeptide reads, in one-letter code: Phosphoglycerate kinase (402 aa).

Residues 21-23 (DFN), Arg36, 59-62 (HLGR), Arg118, and Arg151 each bind substrate. Residues Lys201, Gly293, Glu324, and 353-356 (GGDS) each bind ATP.

It belongs to the phosphoglycerate kinase family. Monomer.

Its subcellular location is the cytoplasm. The catalysed reaction is (2R)-3-phosphoglycerate + ATP = (2R)-3-phospho-glyceroyl phosphate + ADP. It participates in carbohydrate degradation; glycolysis; pyruvate from D-glyceraldehyde 3-phosphate: step 2/5. This Thermosipho africanus (strain TCF52B) protein is Phosphoglycerate kinase.